The sequence spans 443 residues: Ribosomal protein uS12 methylthiotransferase RimO (443 aa).

Residues 8–118 (PKVGFVSLGC…VVNAVHEVVP (111 aa)) enclose the MTTase N-terminal domain. Cys17, Cys53, Cys82, Cys151, Cys155, and Cys158 together coordinate [4Fe-4S] cluster. In terms of domain architecture, Radical SAM core spans 137–375 (LTPRHYAYLK…MAHQQAISTA (239 aa)). Residues 378–443 (QLRIGKEIEV…DEYDMWAEPI (66 aa)) enclose the TRAM domain.

The protein belongs to the methylthiotransferase family. RimO subfamily. [4Fe-4S] cluster serves as cofactor.

The protein resides in the cytoplasm. The enzyme catalyses L-aspartate(89)-[ribosomal protein uS12]-hydrogen + (sulfur carrier)-SH + AH2 + 2 S-adenosyl-L-methionine = 3-methylsulfanyl-L-aspartate(89)-[ribosomal protein uS12]-hydrogen + (sulfur carrier)-H + 5'-deoxyadenosine + L-methionine + A + S-adenosyl-L-homocysteine + 2 H(+). Its function is as follows. Catalyzes the methylthiolation of an aspartic acid residue of ribosomal protein uS12. The sequence is that of Ribosomal protein uS12 methylthiotransferase RimO from Pseudomonas putida (strain GB-1).